The primary structure comprises 212 residues: Pyridoxine/pyridoxamine 5'-phosphate oxidase (212 aa).

Substrate is bound by residues 7 to 10 (RREY) and K66. FMN contacts are provided by residues 61-66 (RIVLLK), 76-77 (YT), R82, K83, and Q105. Substrate is bound by residues Y123, R127, and S131. Residues 140–141 (QS) and W185 each bind FMN. 191 to 193 (RLH) is a binding site for substrate. R195 is an FMN binding site.

This sequence belongs to the pyridoxamine 5'-phosphate oxidase family. In terms of assembly, homodimer. Requires FMN as cofactor.

It catalyses the reaction pyridoxamine 5'-phosphate + O2 + H2O = pyridoxal 5'-phosphate + H2O2 + NH4(+). The enzyme catalyses pyridoxine 5'-phosphate + O2 = pyridoxal 5'-phosphate + H2O2. The protein operates within cofactor metabolism; pyridoxal 5'-phosphate salvage; pyridoxal 5'-phosphate from pyridoxamine 5'-phosphate: step 1/1. It functions in the pathway cofactor metabolism; pyridoxal 5'-phosphate salvage; pyridoxal 5'-phosphate from pyridoxine 5'-phosphate: step 1/1. Functionally, catalyzes the oxidation of either pyridoxine 5'-phosphate (PNP) or pyridoxamine 5'-phosphate (PMP) into pyridoxal 5'-phosphate (PLP). This chain is Pyridoxine/pyridoxamine 5'-phosphate oxidase, found in Hahella chejuensis (strain KCTC 2396).